The primary structure comprises 277 residues: 4-hydroxy-3-methylbut-2-enyl diphosphate reductase (277 aa).

Cys-12 serves as a coordination point for [4Fe-4S] cluster. Residues His-36 and His-70 each coordinate (2E)-4-hydroxy-3-methylbut-2-enyl diphosphate. Dimethylallyl diphosphate-binding residues include His-36 and His-70. Positions 36 and 70 each coordinate isopentenyl diphosphate. [4Fe-4S] cluster is bound at residue Cys-92. His-120 contributes to the (2E)-4-hydroxy-3-methylbut-2-enyl diphosphate binding site. Dimethylallyl diphosphate is bound at residue His-120. His-120 lines the isopentenyl diphosphate pocket. Residue Glu-122 is the Proton donor of the active site. Thr-158 serves as a coordination point for (2E)-4-hydroxy-3-methylbut-2-enyl diphosphate. Cys-186 lines the [4Fe-4S] cluster pocket. Positions 214, 216, and 258 each coordinate (2E)-4-hydroxy-3-methylbut-2-enyl diphosphate. Dimethylallyl diphosphate is bound by residues Ser-214, Asn-216, and Ser-258. Isopentenyl diphosphate is bound by residues Ser-214, Asn-216, and Ser-258.

The protein belongs to the IspH family. [4Fe-4S] cluster is required as a cofactor.

The catalysed reaction is isopentenyl diphosphate + 2 oxidized [2Fe-2S]-[ferredoxin] + H2O = (2E)-4-hydroxy-3-methylbut-2-enyl diphosphate + 2 reduced [2Fe-2S]-[ferredoxin] + 2 H(+). The enzyme catalyses dimethylallyl diphosphate + 2 oxidized [2Fe-2S]-[ferredoxin] + H2O = (2E)-4-hydroxy-3-methylbut-2-enyl diphosphate + 2 reduced [2Fe-2S]-[ferredoxin] + 2 H(+). It participates in isoprenoid biosynthesis; dimethylallyl diphosphate biosynthesis; dimethylallyl diphosphate from (2E)-4-hydroxy-3-methylbutenyl diphosphate: step 1/1. Its pathway is isoprenoid biosynthesis; isopentenyl diphosphate biosynthesis via DXP pathway; isopentenyl diphosphate from 1-deoxy-D-xylulose 5-phosphate: step 6/6. Catalyzes the conversion of 1-hydroxy-2-methyl-2-(E)-butenyl 4-diphosphate (HMBPP) into a mixture of isopentenyl diphosphate (IPP) and dimethylallyl diphosphate (DMAPP). Acts in the terminal step of the DOXP/MEP pathway for isoprenoid precursor biosynthesis. The chain is 4-hydroxy-3-methylbut-2-enyl diphosphate reductase from Campylobacter jejuni subsp. jejuni serotype O:2 (strain ATCC 700819 / NCTC 11168).